The sequence spans 461 residues: Glycine--tRNA ligase (461 aa).

The substrate site is built by arginine 100 and glutamate 163. ATP is bound by residues 195–197, 205–210, 282–283, and 326–329; these read RNE, FRTREF, EL, and GLGR. 210–214 provides a ligand contact to substrate; it reads FEQME. 322 to 326 lines the substrate pocket; sequence EPAAG.

It belongs to the class-II aminoacyl-tRNA synthetase family. As to quaternary structure, homodimer.

The protein localises to the cytoplasm. The enzyme catalyses tRNA(Gly) + glycine + ATP = glycyl-tRNA(Gly) + AMP + diphosphate. Functionally, catalyzes the attachment of glycine to tRNA(Gly). This Corynebacterium glutamicum (strain ATCC 13032 / DSM 20300 / JCM 1318 / BCRC 11384 / CCUG 27702 / LMG 3730 / NBRC 12168 / NCIMB 10025 / NRRL B-2784 / 534) protein is Glycine--tRNA ligase.